A 329-amino-acid chain; its full sequence is Sex comb on midleg-like protein 1 (329 aa).

Phosphoserine occurs at positions 138 and 238. The 68-residue stretch at 258-325 (WSVEAVVLFL…YYIDRLKQGK (68 aa)) folds into the SAM domain.

Belongs to the SCM family.

Its subcellular location is the nucleus. In terms of biological role, putative Polycomb group (PcG) protein. PcG proteins act by forming multiprotein complexes, which are required to maintain the transcriptionally repressive state of homeotic genes throughout development. May be involved in spermatogenesis during sexual maturation. The polypeptide is Sex comb on midleg-like protein 1 (SCML1) (Hoolock hoolock (Western hoolock gibbon)).